Here is a 553-residue protein sequence, read N- to C-terminus: MAAPAAGPVFWRRLLGLLPGRPGLAALLGRLSDRLGRSRERRRRRSPWLLLAPLLSPTVPQVTSPPCCLCPEGVHRFQWIRNLVPEFGVSSSHVRVLSSPAEFFELLKGQIKMAKRRVVMASLYLGTGPLEQELVDCLESSLEKSLQSKFPSDLKVSILLDFTRGSRGRKNSRTMLLPLLQRFPEHVRVSLFHTPNLRGLLRLLIPERFNETIGLQHIKVYLFDNNVVLSGANLSDSYFTNRQDRYVFLQDCAEIADFFTELVDAVGDVSLQLQGDDTVDVVDGMVHPYKGDRAAYCRAANKRVMDVIHSARTRQQLLHAQTFHSDSLLSQEEAAAAGDRRPAPDTWIYPLIQMKPFEIQIDEIVTETLLTEAERGAKVFLTTGYFNLTQAYMDLVLGTRAEYQILLASPEVNGFFGAKGVAGAIPAAYVHIERQFYGEVCGLGQQDRVQLQEYWRTGWTFHAKGLWLYLAGSSLPCLTLIGSPNFGYRSVHRDLEAQIAIVTESRALQQQLHQEQEQLYLRSSVVTSATFEQPGRQVKLWVKMVTPLIKNFF.

The transit peptide at 1–25 directs the protein to the mitochondrion; it reads MAAPAAGPVFWRRLLGLLPGRPGLA. Residue Ser-46 is modified to Phosphoserine. 121 to 128 contacts ATP; that stretch reads ASLYLGTG. PLD phosphodiesterase domains follow at residues 212 to 238 and 457 to 490; these read TIGL…SDSY and TGWT…GYRS. Catalysis depends on residues His-217, Lys-219, and Asp-224.

The protein belongs to the CDP-alcohol phosphatidyltransferase class-II family.

Its subcellular location is the mitochondrion. The enzyme catalyses a CDP-1,2-diacyl-sn-glycerol + sn-glycerol 3-phosphate = a 1,2-diacyl-sn-glycero-3-phospho-(1'-sn-glycero-3'-phosphate) + CMP + H(+). It participates in phospholipid metabolism; phosphatidylglycerol biosynthesis; phosphatidylglycerol from CDP-diacylglycerol: step 1/2. Activated by calcium and magnesium and inhibited by other bivalent cations. In terms of biological role, functions in the biosynthesis of the anionic phospholipids phosphatidylglycerol and cardiolipin. The chain is CDP-diacylglycerol--glycerol-3-phosphate 3-phosphatidyltransferase, mitochondrial (PGS1) from Cricetulus griseus (Chinese hamster).